The sequence spans 162 residues: Flagellar assembly factor FliW (162 aa).

It belongs to the FliW family. Interacts with translational regulator CsrA and flagellin(s).

It localises to the cytoplasm. In terms of biological role, acts as an anti-CsrA protein, binds CsrA and prevents it from repressing translation of its target genes, one of which is flagellin. Binds to flagellin and participates in the assembly of the flagellum. This Alkaliphilus metalliredigens (strain QYMF) protein is Flagellar assembly factor FliW.